Consider the following 348-residue polypeptide: Protein RecA (348 aa).

64–71 (GPESSGKT) lines the ATP pocket. Positions 328–348 (DTGGAAPAQEDEAQAQEELEF) are disordered. Residues 336-348 (QEDEAQAQEELEF) are compositionally biased toward acidic residues.

Belongs to the RecA family.

Its subcellular location is the cytoplasm. In terms of biological role, can catalyze the hydrolysis of ATP in the presence of single-stranded DNA, the ATP-dependent uptake of single-stranded DNA by duplex DNA, and the ATP-dependent hybridization of homologous single-stranded DNAs. It interacts with LexA causing its activation and leading to its autocatalytic cleavage. The polypeptide is Protein RecA (Bacillus licheniformis (strain ATCC 14580 / DSM 13 / JCM 2505 / CCUG 7422 / NBRC 12200 / NCIMB 9375 / NCTC 10341 / NRRL NRS-1264 / Gibson 46)).